The chain runs to 917 residues: Isoleucine--tRNA ligase (917 aa).

The 'HIGH' region motif lies at 57–67 (PYANGNLHMGH). L-isoleucyl-5'-AMP is bound at residue Glu554. The short motif at 595-599 (KMSKS) is the 'KMSKS' region element. Lys598 contributes to the ATP binding site. Zn(2+) is bound by residues Cys886, Cys889, Cys906, and Cys909.

Belongs to the class-I aminoacyl-tRNA synthetase family. IleS type 1 subfamily. Monomer. Zn(2+) serves as cofactor.

It localises to the cytoplasm. It catalyses the reaction tRNA(Ile) + L-isoleucine + ATP = L-isoleucyl-tRNA(Ile) + AMP + diphosphate. Its function is as follows. Catalyzes the attachment of isoleucine to tRNA(Ile). As IleRS can inadvertently accommodate and process structurally similar amino acids such as valine, to avoid such errors it has two additional distinct tRNA(Ile)-dependent editing activities. One activity is designated as 'pretransfer' editing and involves the hydrolysis of activated Val-AMP. The other activity is designated 'posttransfer' editing and involves deacylation of mischarged Val-tRNA(Ile). This is Isoleucine--tRNA ligase from Staphylococcus aureus (strain Mu3 / ATCC 700698).